A 447-amino-acid chain; its full sequence is Cysteine--tRNA ligase (447 aa).

C28 contributes to the Zn(2+) binding site. A 'HIGH' region motif is present at residues 30-40 (PTVYNYIHIGN). The Zn(2+) site is built by C211, H236, and E240. The 'KMSKS' region signature appears at 268-272 (KMSKS). K271 contributes to the ATP binding site.

Belongs to the class-I aminoacyl-tRNA synthetase family. As to quaternary structure, monomer. The cofactor is Zn(2+).

Its subcellular location is the cytoplasm. The enzyme catalyses tRNA(Cys) + L-cysteine + ATP = L-cysteinyl-tRNA(Cys) + AMP + diphosphate. The chain is Cysteine--tRNA ligase from Streptococcus agalactiae serotype III (strain NEM316).